We begin with the raw amino-acid sequence, 301 residues long: ATP synthase gamma chain (301 aa).

The protein belongs to the ATPase gamma chain family. In terms of assembly, F-type ATPases have 2 components, CF(1) - the catalytic core - and CF(0) - the membrane proton channel. CF(1) has five subunits: alpha(3), beta(3), gamma(1), delta(1), epsilon(1). CF(0) has three main subunits: a, b and c.

The protein localises to the cell inner membrane. In terms of biological role, produces ATP from ADP in the presence of a proton gradient across the membrane. The gamma chain is believed to be important in regulating ATPase activity and the flow of protons through the CF(0) complex. In Helicobacter pylori (strain J99 / ATCC 700824) (Campylobacter pylori J99), this protein is ATP synthase gamma chain.